The following is a 347-amino-acid chain: Dihydroorotase (347 aa).

Positions 17 and 19 each coordinate Zn(2+). Substrate-binding positions include histidine 19 to arginine 21 and asparagine 45. Zn(2+)-binding residues include lysine 103, histidine 140, and histidine 178. Position 103 is an N6-carboxylysine (lysine 103). Histidine 140 is a substrate binding site. Leucine 223 lines the substrate pocket. Position 251 (aspartate 251) interacts with Zn(2+). Aspartate 251 is an active-site residue. Substrate is bound by residues histidine 255 and alanine 267.

This sequence belongs to the metallo-dependent hydrolases superfamily. DHOase family. Class II DHOase subfamily. In terms of assembly, homodimer. Zn(2+) is required as a cofactor.

It carries out the reaction (S)-dihydroorotate + H2O = N-carbamoyl-L-aspartate + H(+). It participates in pyrimidine metabolism; UMP biosynthesis via de novo pathway; (S)-dihydroorotate from bicarbonate: step 3/3. Catalyzes the reversible cyclization of carbamoyl aspartate to dihydroorotate. The sequence is that of Dihydroorotase from Pectobacterium atrosepticum (strain SCRI 1043 / ATCC BAA-672) (Erwinia carotovora subsp. atroseptica).